We begin with the raw amino-acid sequence, 301 residues long: Olfactory receptor 10AG1 (301 aa).

Residues 1–16 are Extracellular-facing; sequence MEFVLLGFSDIPNLHW. A helical transmembrane segment spans residues 17–37; it reads MLFSIFLLMYLMILMCNGIII. Residues 38–45 are Cytoplasmic-facing; that stretch reads LLIKIHPA. The chain crosses the membrane as a helical span at residues 46–66; that stretch reads LQTPMYFFLSNFSLLEICYVT. The Extracellular portion of the chain corresponds to 67 to 90; the sequence is IIIPRMLMDIWTQKGNISLFACAT. An N-linked (GlcNAc...) asparagine glycan is attached at asparagine 82. A disulfide bridge connects residues cysteine 88 and cysteine 180. The helical transmembrane segment at 91–111 threads the bilayer; the sequence is QMCFFLMLGGTECLLLTVMAY. Residues 112-130 lie on the Cytoplasmic side of the membrane; sequence DRYVAICKPLQYPLVMNHK. The chain crosses the membrane as a helical span at residues 131 to 151; that stretch reads VCIQLIIASWTITIPVVIGET. The Extracellular segment spans residues 152–188; the sequence is CQIFLLPFCGTNTINHFFCDIPPILKLACGNIFVNEI. A helical membrane pass occupies residues 189–208; the sequence is TVHVVAVVFITVPFLLIVVS. The Cytoplasmic segment spans residues 209 to 228; that stretch reads YGKIISNILKLSSARGKAKA. Residues 229 to 249 form a helical membrane-spanning segment; the sequence is FSTCSSHLIVVILFFGAGTIT. Residues 250–262 lie on the Extracellular side of the membrane; sequence YLQPKPHQFQRMG. Residues 263-283 traverse the membrane as a helical segment; that stretch reads KLISLFYTILIPTLNPIIYTL. At 284–301 the chain is on the cytoplasmic side; the sequence is RNKDIMVALRKLLAKLLT.

The protein belongs to the G-protein coupled receptor 1 family.

The protein localises to the cell membrane. Functionally, odorant receptor. This Homo sapiens (Human) protein is Olfactory receptor 10AG1 (OR10AG1).